The chain runs to 581 residues: Proline--tRNA ligase (581 aa).

The protein belongs to the class-II aminoacyl-tRNA synthetase family. ProS type 1 subfamily. In terms of assembly, homodimer.

It localises to the cytoplasm. It catalyses the reaction tRNA(Pro) + L-proline + ATP = L-prolyl-tRNA(Pro) + AMP + diphosphate. Catalyzes the attachment of proline to tRNA(Pro) in a two-step reaction: proline is first activated by ATP to form Pro-AMP and then transferred to the acceptor end of tRNA(Pro). As ProRS can inadvertently accommodate and process non-cognate amino acids such as alanine and cysteine, to avoid such errors it has two additional distinct editing activities against alanine. One activity is designated as 'pretransfer' editing and involves the tRNA(Pro)-independent hydrolysis of activated Ala-AMP. The other activity is designated 'posttransfer' editing and involves deacylation of mischarged Ala-tRNA(Pro). The misacylated Cys-tRNA(Pro) is not edited by ProRS. The protein is Proline--tRNA ligase of Rhodococcus erythropolis (strain PR4 / NBRC 100887).